Here is a 446-residue protein sequence, read N- to C-terminus: Maltoporin (446 aa).

Positions 1–25 (MMITLRKLPLAVAVAAGVMSAQAMA) are cleaved as a signal peptide.

The protein belongs to the porin LamB (TC 1.B.3) family. Homotrimer formed of three 18-stranded antiparallel beta-barrels, containing three independent channels.

The protein localises to the cell outer membrane. The enzyme catalyses beta-maltose(in) = beta-maltose(out). In terms of biological role, involved in the transport of maltose and maltodextrins. This Escherichia coli O8 (strain IAI1) protein is Maltoporin.